Reading from the N-terminus, the 392-residue chain is HORMA domain-containing protein 1 (392 aa).

An HORMA domain is found at His25–Val227. Residues Ser323–Arg359 form a disordered region. Positions Lys341–Ser353 are enriched in polar residues. Position 375 is a phosphoserine (Ser375). The Nuclear localization signal motif lies at Lys381–Arg384.

Interacts with HORMAD2. Interacts with IHO1. In terms of processing, phosphorylated at Ser-375 in a SPO11-dependent manner. As to expression, specifically expressed in meiotic germ cells.

It is found in the nucleus. The protein resides in the chromosome. Its subcellular location is the cytoplasm. Its function is as follows. Plays a key role in meiotic progression. Regulates 3 different functions during meiosis: ensures that sufficient numbers of processed DNA double-strand breaks (DSBs) are available for successful homology search by increasing the steady-state numbers of single-stranded DSB ends. Promotes synaptonemal-complex formation independently of its role in homology search. Plays a key role in the male mid-pachytene checkpoint and the female meiotic prophase checkpoint: required for efficient build-up of ATR activity on unsynapsed chromosome regions, a process believed to form the basis of meiotic silencing of unsynapsed chromatin (MSUC) and meiotic prophase quality control in both sexes. The sequence is that of HORMA domain-containing protein 1 from Mus musculus (Mouse).